We begin with the raw amino-acid sequence, 208 residues long: FMN-dependent NADH:quinone oxidoreductase 1 (208 aa).

17-19 (SVS) lines the FMN pocket.

Belongs to the azoreductase type 1 family. As to quaternary structure, homodimer. It depends on FMN as a cofactor.

It catalyses the reaction 2 a quinone + NADH + H(+) = 2 a 1,4-benzosemiquinone + NAD(+). It carries out the reaction N,N-dimethyl-1,4-phenylenediamine + anthranilate + 2 NAD(+) = 2-(4-dimethylaminophenyl)diazenylbenzoate + 2 NADH + 2 H(+). Quinone reductase that provides resistance to thiol-specific stress caused by electrophilic quinones. Its function is as follows. Also exhibits azoreductase activity. Catalyzes the reductive cleavage of the azo bond in aromatic azo compounds to the corresponding amines. This is FMN-dependent NADH:quinone oxidoreductase 1 from Listeria monocytogenes serovar 1/2a (strain ATCC BAA-679 / EGD-e).